The sequence spans 115 residues: Large ribosomal subunit protein bL19 (115 aa).

It belongs to the bacterial ribosomal protein bL19 family.

In terms of biological role, this protein is located at the 30S-50S ribosomal subunit interface and may play a role in the structure and function of the aminoacyl-tRNA binding site. This Desulfovibrio desulfuricans (strain ATCC 27774 / DSM 6949 / MB) protein is Large ribosomal subunit protein bL19.